Consider the following 946-residue polypeptide: Protein TMA108 (946 aa).

N-acetylserine is present on Ser-2. Residue 293–297 (MAMEN) coordinates substrate. A Zn(2+)-binding site is contributed by His-330. The active-site Proton acceptor is the Glu-331. Zn(2+) is bound by residues His-334 and Glu-353.

The protein belongs to the peptidase M1 family. As to quaternary structure, associates with ribosomal complexes. Zn(2+) is required as a cofactor.

It is found in the cytoplasm. In terms of biological role, putative zinc aminopeptidase which may be involved in ribosome biogenesis. This Saccharomyces cerevisiae (strain ATCC 204508 / S288c) (Baker's yeast) protein is Protein TMA108 (TMA108).